Reading from the N-terminus, the 314-residue chain is Ribosomal protein L11 methyltransferase (314 aa).

S-adenosyl-L-methionine-binding residues include Thr161, Gly182, Asp204, and Asn248.

This sequence belongs to the methyltransferase superfamily. PrmA family.

The protein resides in the cytoplasm. The catalysed reaction is L-lysyl-[protein] + 3 S-adenosyl-L-methionine = N(6),N(6),N(6)-trimethyl-L-lysyl-[protein] + 3 S-adenosyl-L-homocysteine + 3 H(+). Its function is as follows. Methylates ribosomal protein L11. This Listeria innocua serovar 6a (strain ATCC BAA-680 / CLIP 11262) protein is Ribosomal protein L11 methyltransferase.